We begin with the raw amino-acid sequence, 323 residues long: Aspartate carbamoyltransferase catalytic subunit (323 aa).

Arg71 and Thr72 together coordinate carbamoyl phosphate. Residue Lys99 coordinates L-aspartate. Residues Arg121, His151, and Gln154 each contribute to the carbamoyl phosphate site. Arg184 and Arg239 together coordinate L-aspartate. The carbamoyl phosphate site is built by Gly280 and Pro281.

It belongs to the aspartate/ornithine carbamoyltransferase superfamily. ATCase family. As to quaternary structure, heterododecamer (2C3:3R2) of six catalytic PyrB chains organized as two trimers (C3), and six regulatory PyrI chains organized as three dimers (R2).

The catalysed reaction is carbamoyl phosphate + L-aspartate = N-carbamoyl-L-aspartate + phosphate + H(+). It functions in the pathway pyrimidine metabolism; UMP biosynthesis via de novo pathway; (S)-dihydroorotate from bicarbonate: step 2/3. Catalyzes the condensation of carbamoyl phosphate and aspartate to form carbamoyl aspartate and inorganic phosphate, the committed step in the de novo pyrimidine nucleotide biosynthesis pathway. The protein is Aspartate carbamoyltransferase catalytic subunit of Cupriavidus metallidurans (strain ATCC 43123 / DSM 2839 / NBRC 102507 / CH34) (Ralstonia metallidurans).